We begin with the raw amino-acid sequence, 90 residues long: Conotoxin Mr22.1 (90 aa).

Residues 1–18 (MMTRVFFAMFFLMALTEG) form the signal peptide. A propeptide spanning residues 19–49 (WPRLYDSDCVRGRNMHITCFKDQTCGLTVKR) is cleaved from the precursor. Trp75 carries the post-translational modification 6'-bromotryptophan.

Belongs to the E superfamily. Post-translationally, contains 4 disulfide bonds. Expressed by the venom duct.

The protein resides in the secreted. This is Conotoxin Mr22.1 from Conus marmoreus (Marble cone).